A 315-amino-acid polypeptide reads, in one-letter code: DNA-directed RNA polymerase subunit alpha (315 aa).

Residues 1–228 (MLEIEKPKIE…EHLRLFIGLT (228 aa)) form an alpha N-terminal domain (alpha-NTD) region. The alpha C-terminal domain (alpha-CTD) stretch occupies residues 245–315 (KDKILEMTIE…LGLGFRKADD (71 aa)).

It belongs to the RNA polymerase alpha chain family. Homodimer. The RNAP catalytic core consists of 2 alpha, 1 beta, 1 beta' and 1 omega subunit. When a sigma factor is associated with the core the holoenzyme is formed, which can initiate transcription.

The enzyme catalyses RNA(n) + a ribonucleoside 5'-triphosphate = RNA(n+1) + diphosphate. DNA-dependent RNA polymerase catalyzes the transcription of DNA into RNA using the four ribonucleoside triphosphates as substrates. In Desulfitobacterium hafniense (strain DSM 10664 / DCB-2), this protein is DNA-directed RNA polymerase subunit alpha.